Here is a 711-residue protein sequence, read N- to C-terminus: Hydroperoxide isomerase ALOXE3 (711 aa).

Residues 2–119 (AVYRLCVTTG…TVELRPGTAR (118 aa)) form the PLAT domain. The Lipoxygenase domain occupies 120-711 (TICQDSLPLL…PPLIENSVSI (592 aa)). Fe cation-binding residues include H408, H413, H588, N592, and I711.

The protein belongs to the lipoxygenase family. Fe cation serves as cofactor. Skin specific.

Its subcellular location is the cytoplasm. It catalyses the reaction a hydroperoxyeicosatetraenoate = a hydroxy-epoxy-eicosatetraenoate. The enzyme catalyses (8S)-hydroperoxy-(5Z,9E,11Z,14Z)-eicosatetraenoate = (10R)-hydroxy-(8S,9S)-epoxy-(5Z,11Z,14Z)-eicosatrienoate. It carries out the reaction (12R)-hydroperoxy-(5Z,8Z,10E,14Z)-eicosatetraenoate = (8R)-hydroxy-(11R,12R)-epoxy-(5Z,9E,14Z)-eicosatrienoate. The catalysed reaction is (12S)-hydroperoxy-(5Z,8Z,10E,14Z)-eicosatetraenoate = (8R)-hydroxy-(11S,12S)-epoxy-(5Z,9E,14Z)-eicosatrienoate. It catalyses the reaction (12S)-hydroperoxy-(5Z,8Z,10E,14Z)-eicosatetraenoate = (10R)-hydroxy-(11S,12S)-epoxy-(5Z,8Z,14Z)-eicosatrienoate. The enzyme catalyses (15S)-hydroperoxy-(5Z,8Z,11Z,13E)-eicosatetraenoate = (13R)-hydroxy-(14S,15S)-epoxy-(5Z,8Z,11Z)-eicosatrienoate. It carries out the reaction (13S)-hydroperoxy-(9Z,11E)-octadecadienoate = 11-hydroxy-(12S,13S)-epoxy-(9Z)-octadecenoate. The catalysed reaction is (5S)-hydroperoxy-(6E,8Z,11Z,14Z)-eicosatetraenoate = 7R-hydroxy-5S,6S-epoxy-(8Z,11Z,14Z)-eicosatrienoate. It catalyses the reaction N-[omega-(9R)-hydroperoxy-(10E,12Z)-octadecadienoyloxy]acyl-beta-D-glucosyl-(1&lt;-&gt;1)-octadecasphing-4E-enine = a N-[omega-(9R,10R)-epoxy-(13R)-hydroxy-(11E)-octadecenoyloxy]acyl-beta-D-glucosyl-(1&lt;-&gt;1)-sphing-4E-enine. The enzyme catalyses a N-[omega-(9R)-hydroperoxy-(10E,12Z)-octadecadienoyloxy]-acylsphin-4E-enine = a N-[omega-(9R,10R)-epoxy-(13R)-hydroxy-(11E)-octadecenoyloxy]-acylsphing-4E-enine. It carries out the reaction a hydroperoxyeicosatetraenoate = an oxoeicosatetraenoate + H2O. The catalysed reaction is (8R)-hydroperoxy-(5Z,9E,11Z,14Z)-eicosatetraenoate = 8-oxo-(5Z,9E,11Z,14Z)-eicosatetraenoate + H2O. It catalyses the reaction (8S)-hydroperoxy-(5Z,9E,11Z,14Z)-eicosatetraenoate = 8-oxo-(5Z,9E,11Z,14Z)-eicosatetraenoate + H2O. The enzyme catalyses (12R)-hydroperoxy-(5Z,8Z,10E,14Z)-eicosatetraenoate = 12-oxo-(5Z,8Z,10E,14Z)-eicosatetraenoate + H2O. It carries out the reaction (12S)-hydroperoxy-(5Z,8Z,10E,14Z)-eicosatetraenoate = 12-oxo-(5Z,8Z,10E,14Z)-eicosatetraenoate + H2O. The catalysed reaction is (15S)-hydroperoxy-(5Z,8Z,11Z,13E)-eicosatetraenoate = 15-oxo-(5Z,8Z,11Z,13E)-eicosatetraenoate + H2O. It catalyses the reaction (13S)-hydroperoxy-(9Z,11E)-octadecadienoate = 13-oxo-(9Z,11E)-octadecadienoate + H2O. It participates in lipid metabolism; hydroperoxy eicosatetraenoic acid biosynthesis. Its pathway is lipid metabolism; sphingolipid metabolism. In terms of biological role, non-heme iron-containing lipoxygenase which is atypical in that it displays a prominent hydroperoxide isomerase activity and a reduced lipoxygenases activity. The hydroperoxide isomerase activity catalyzes the isomerization of hydroperoxides, derived from arachidonic and linoleic acid by ALOX12B, into hepoxilin-type epoxyalcohols and ketones. In presence of oxygen, oxygenates polyunsaturated fatty acids, including arachidonic acid, to produce fatty acid hydroperoxides. In the skin, acts downstream of ALOX12B on the linoleate moiety of esterified omega-hydroxyacyl-sphingosine (EOS) ceramides to produce an epoxy-ketone derivative, a crucial step in the conjugation of omega-hydroxyceramide to membrane proteins. Therefore plays a crucial role in the synthesis of corneocytes lipid envelope and the establishment of the skin barrier to water loss. In parallel, it may have a signaling function in barrier formation through the production of hepoxilins metabolites. Also plays a role in adipocyte differentiation through hepoxilin A3 and hepoxilin B3 production which in turn activate PPARG. Through the production of hepoxilins in the spinal cord, it may regulate inflammatory tactile allodynia. The chain is Hydroperoxide isomerase ALOXE3 from Mus musculus (Mouse).